The primary structure comprises 309 residues: Taste receptor type 2 member 46 (309 aa).

Position 1 (Met-1) is a topological domain, extracellular. Residues Ile-2 to Phe-22 traverse the membrane as a helical segment. The Cytoplasmic segment spans residues Ala-23–Gln-46. The helical transmembrane segment at Ile-47–Tyr-67 threads the bilayer. Residues Ala-68–Asn-86 lie on the Extracellular side of the membrane. A helical transmembrane segment spans residues Val-87 to Leu-107. Residues Leu-108–Lys-126 lie on the Cytoplasmic side of the membrane. A helical membrane pass occupies residues Ser-127–Ile-147. Residues Asn-148–Thr-178 are Extracellular-facing. Residues Asn-161 and Asn-176 are each glycosylated (N-linked (GlcNAc...) asparagine). A helical transmembrane segment spans residues Val-179 to Ile-199. Residues Cys-200–Gln-229 are Cytoplasmic-facing. A helical membrane pass occupies residues Thr-230–Trp-250. Topologically, residues Ser-251–Pro-259 are extracellular. A helical membrane pass occupies residues Val-260–Ile-280. The Cytoplasmic segment spans residues Trp-281–Ser-309.

The protein belongs to the G-protein coupled receptor T2R family. In terms of tissue distribution, expressed in subsets of taste receptor cells of the tongue and exclusively in gustducin-positive cells. Expressed on ciliated airway epithelium.

Its subcellular location is the membrane. The protein resides in the cell projection. It is found in the cilium membrane. Receptor that may play a role in the perception of bitterness and is gustducin-linked. May play a role in sensing the chemical composition of the gastrointestinal content. The activity of this receptor may stimulate alpha gustducin, mediate PLC-beta-2 activation and lead to the gating of TRPM5. In airway epithelial cells, binding of bitter compounds increases the intracellular calcium ion concentration and stimulates ciliary beat frequency. In Homo sapiens (Human), this protein is Taste receptor type 2 member 46 (TAS2R46).